A 328-amino-acid chain; its full sequence is Peroxidase 59 (328 aa).

Residues 1-28 (MKTQTKVMGGHVLLTVFTLCMLCSGVRA) form the signal peptide. Position 29 is a pyrrolidone carboxylic acid (Q29). 4 disulfides stabilise this stretch: C39/C116, C72/C77, C122/C323, and C200/C232. H70 acts as the Proton acceptor in catalysis. Ca(2+) contacts are provided by D71, V74, G76, D78, and S80. P163 is a substrate binding site. N-linked (GlcNAc...) asparagine glycosylation occurs at N182. Residue H193 coordinates heme b. Residue T194 coordinates Ca(2+). N209 and N239 each carry an N-linked (GlcNAc...) asparagine glycan. 4 residues coordinate Ca(2+): D245, T248, T251, and D253. 2 N-linked (GlcNAc...) asparagine glycosylation sites follow: N281 and N310.

The protein belongs to the peroxidase family. Classical plant (class III) peroxidase subfamily. The cofactor is heme b. It depends on Ca(2+) as a cofactor. Slightly expressed in roots.

Its subcellular location is the secreted. It carries out the reaction 2 a phenolic donor + H2O2 = 2 a phenolic radical donor + 2 H2O. Functionally, removal of H(2)O(2), oxidation of toxic reductants, biosynthesis and degradation of lignin, suberization, auxin catabolism, response to environmental stresses such as wounding, pathogen attack and oxidative stress. These functions might be dependent on each isozyme/isoform in each plant tissue. The protein is Peroxidase 59 (PER59) of Arabidopsis thaliana (Mouse-ear cress).